A 161-amino-acid polypeptide reads, in one-letter code: Blue copper protein 1a (161 aa).

Positions 1–23 are cleaved as a signal peptide; the sequence is MASSRVVLILSISMVLLSSVAIA. Residues 24–124 enclose the Phytocyanin domain; sequence TDHIVGDDKG…QMKLVITVLA (101 aa). His64 lines the Cu cation pocket. The N-linked (GlcNAc...) asparagine glycan is linked to Asn70. Cys77 and Cys111 are joined by a disulfide. Cu cation is bound by residues Cys105, His110, and Met116. A helical transmembrane segment spans residues 141–161; it reads VVSSLFGVVMAIMVAIAVIFA.

It localises to the membrane. This Medicago truncatula (Barrel medic) protein is Blue copper protein 1a.